Consider the following 562-residue polypeptide: Putative transport protein YPA_0617 (562 aa).

A run of 6 helical transmembrane segments spans residues 8–28 (LLNG…LCLG), 37–57 (LGNA…HFAI), 66–86 (FMLF…SIFF), 94–114 (MLAL…GKLF), 118–138 (IGLT…LVGA), and 158–178 (NLSL…ILGA). RCK C-terminal domains are found at residues 202 to 288 (LDTD…SFRN) and 290 to 373 (KEVF…KIGF). 5 helical membrane passes run 383 to 403 (LLAF…TFQF), 406 to 426 (FSFG…LGFL), 447 to 467 (FGLM…INSS), 475 to 495 (MLIS…VFGA), and 541 to 561 (IANV…PGIL).

The protein belongs to the AAE transporter (TC 2.A.81) family. YbjL subfamily.

The protein resides in the cell membrane. This is Putative transport protein YPA_0617 from Yersinia pestis bv. Antiqua (strain Antiqua).